Here is a 238-residue protein sequence, read N- to C-terminus: Segregation and condensation protein A (238 aa).

It belongs to the ScpA family. In terms of assembly, component of a cohesin-like complex composed of ScpA, ScpB and the Smc homodimer, in which ScpA and ScpB bind to the head domain of Smc. The presence of the three proteins is required for the association of the complex with DNA.

It is found in the cytoplasm. Functionally, participates in chromosomal partition during cell division. May act via the formation of a condensin-like complex containing Smc and ScpB that pull DNA away from mid-cell into both cell halves. The sequence is that of Segregation and condensation protein A from Macrococcus caseolyticus (strain JCSC5402) (Macrococcoides caseolyticum).